We begin with the raw amino-acid sequence, 259 residues long: FAD-linked sulfhydryl oxidase (259 aa).

Belongs to the baculoviridae p33 family. As to quaternary structure, homodimer.

It is found in the host cytoplasm. Its subcellular location is the host nucleus. The enzyme catalyses 2 R'C(R)SH + O2 = R'C(R)S-S(R)CR' + H2O2. Functional FAD-linked sulfhydryl oxidase that is required for infectious budded virion (BV) production and for the formation of enveloped occluded virion (ODV). This is FAD-linked sulfhydryl oxidase (P33) from Lepidoptera (butterflies and moths).